We begin with the raw amino-acid sequence, 421 residues long: AP-3 complex subunit mu (421 aa).

An MHD domain is found at 178–420; it reads QNKIFFDIIE…TTKAGKFQVR (243 aa).

It belongs to the adaptor complexes medium subunit family. In terms of assembly, adaptor protein complex 3 (AP-3) is a heterotetramer composed of two large adaptins (delta-type subunit and beta-type subunit), a medium adaptin (mu-type subunit) and a small adaptin (sigma-type subunit).

It is found in the endosome membrane. Functionally, part of the AP-3 complex, an adaptor-related complex which is essential for the compartmentalization of the endocytic pathway. The protein is AP-3 complex subunit mu (apm3) of Dictyostelium discoideum (Social amoeba).